The following is a 309-amino-acid chain: Short chain dehydrogenase MYCFIDRAFT_6125 (309 aa).

Residues isoleucine 43, arginine 67, aspartate 88, and arginine 150 each contribute to the NADP(+) site. Serine 168 serves as the catalytic Proton donor. The NADP(+) site is built by tyrosine 182, lysine 186, valine 215, and serine 217. Tyrosine 182 acts as the Proton acceptor in catalysis. Catalysis depends on lysine 186, which acts as the Lowers pKa of active site Tyr.

Belongs to the short-chain dehydrogenases/reductases (SDR) family.

The protein operates within secondary metabolite biosynthesis. Short chain dehydrogenase; part of the gene cluster that mediates the biosynthesis of an emodin derivative that may be involved in black Sigatoka disease of banana. The pathway begins with the synthesis of atrochrysone thioester by the polyketide synthase PKS8-1. The atrochrysone carboxyl ACP thioesterase MYCFIDRAFT_190111 then breaks the thioester bond and releases the atrochrysone carboxylic acid from PKS8-1. The decarboxylase MYCFIDRAFT_34057 then catalyzes the concerted decarboxylation-elimination required to convert atochrysone carboxylic acid into emodin anthrone, which is further oxidized to emodin by the anthrone oxygenase MYCFIDRAFT_34418. The functions of the other tailoring enzymes as well as the final product of the cluster have still to be identified. This chain is Short chain dehydrogenase MYCFIDRAFT_6125, found in Pseudocercospora fijiensis (strain CIRAD86) (Black leaf streak disease fungus).